The primary structure comprises 199 residues: Large ribosomal subunit protein mL51 (199 aa).

The transit peptide at 1 to 15 (MNSASISRLTSVIRT) directs the protein to the mitochondrion.

It belongs to the mitochondrion-specific ribosomal protein mL51 family. In terms of assembly, component of the mitochondrial ribosome large subunit (39S) which comprises a 16S rRNA and about 50 distinct proteins.

It is found in the mitochondrion. This chain is Large ribosomal subunit protein mL51 (mrpl-51), found in Caenorhabditis briggsae.